The chain runs to 1185 residues: MERSALQWVGAPCGSHGPYVFYRAFRFQRRGGGRARVLSLGDFFFVRCRAEEPACIAELQLLWEERTSRQLLSSAKLYFLPEDTPQGRTSDHGEDEVIAVSEKVTVKLEDLAKWAQSDFSKWKCGFRAEPVKPMDVGKNGQKEALMRYRQSTLNSGLNFKDILKEKADLGEDDEDSNLLILSYPQYCRYRSMLKRIQDKPSSILTDQFVLALGGIAVTSKNPQIFYCRDTFDHPTLIENESICDEFAPNLKGRPRKKKPCPQRRDSLNGIKDSNNNSESKAVAKVKCEAKSALPKPKSNNSNCKKGSSEDKSKIAVGEECRADEQAFLVALYKYMKERKTPIERIPYLGFKQINLWTMFQAAQKLGGYETITARRQWKHIYDELGGNPGSTSAATCTRRHYERLILPYERFIKGEEDKPLPPVKPRKQDNSSQEGEAKTKVSGTKRIKNENQKSKKEKDNAQKPQDASEVSSEQEKDQESADQKNFTEHPTAGETKQPNQGPPPLLPEAARPLPMEKIDVTENSSSSEKAKEEVPHLSSFPSLSMPPDEDTVLDATVTKRLHSSADTQEDTKPERRIHKAFTESLENEPPEMPFSTFPVQLPTQSDMEDDKLPEMADYIANCTVKVDQLGNEDIHNALKQTPKVLVVQNFDMFKEKELPGSMSDDSTFGYTPLLYSKGNPGIMSPLAKKKLLSQVSGAALSCSYPYGSPPPLISKKKLNSRDELSSSLSQGPHVPNSDPIAINRPSVIQHVQSFKSKEERKSINDVFKHDMLSKVDPQRCDFSQHCLSSLAESYVPKTDIQDCKDKMTEKRALQHSRVPTFLADFYSSPHLHNLFRHTEHHLNNEQTSKYLPRDMFRESENISTFTQHKHQEKLNLNYHPSLHQQEKKATVEASSDDQPTDLSLPKSIHKQTAKAPGPGLSHSSMAQQEGKGVSLFQAASSQAVSLDCNPKACRVSPMAMTAPKKHSELLHRSGKQQAQRLENLRKMEGMVHPIISRRMSPQNIGAARPLKRGLEELDKVISEKKVRAVSPLHLPKETSVKEKVPDAEGEGSKSLHGLHSGSVLESHKFPLSAPIFPGLYPGTLCTGLNNRLPPGYSHPLQYLKNQTVLSPLMQPLALHSLMVQRQFLTSPANSQQLYRHLATATPVGSSYGDLLHNSIYPLAAINPQAAFPPSQLSSVHPSTKL.

5 disordered regions span residues 248 to 281 (PNLK…ESKA), 413 to 550 (KGEE…PDED), 713 to 742 (ISKK…PIAI), 883 to 932 (HQQE…EGKG), and 1033 to 1058 (HLPK…LHGL). The span at 252–261 (GRPRKKKPCP) shows a compositional bias: basic residues. Residues 321 to 413 (RADEQAFLVA…LILPYERFIK (93 aa)) enclose the ARID domain. Residues 447–461 (IKNENQKSKKEKDNA) are compositionally biased toward basic and acidic residues. A compositionally biased stretch (polar residues) spans 462–471 (QKPQDASEVS). The segment covering 473 to 487 (EQEKDQESADQKNFT) has biased composition (basic and acidic residues). The segment covering 1034–1053 (LPKETSVKEKVPDAEGEGSK) has biased composition (basic and acidic residues).

The protein belongs to the ARID5B family.

It localises to the nucleus. Transcription coactivator that binds to the 5'-AATA[CT]-3' core sequence and plays a key role in adipogenesis and liver development. Required for adipogenesis: regulates triglyceride metabolism in adipocytes by regulating expression of adipogenic genes. The sequence is that of AT-rich interactive domain-containing protein 5B (ARID5B) from Gallus gallus (Chicken).